A 90-amino-acid chain; its full sequence is Acylphosphatase (90 aa).

In terms of domain architecture, Acylphosphatase-like spans 3-90; it reads NYKIIVFGTV…KTYNDFSVTY (88 aa). Residues R18 and N36 contribute to the active site.

Belongs to the acylphosphatase family.

It catalyses the reaction an acyl phosphate + H2O = a carboxylate + phosphate + H(+). In Ligilactobacillus salivarius (strain UCC118) (Lactobacillus salivarius), this protein is Acylphosphatase (acyP).